Reading from the N-terminus, the 202-residue chain is Alcohol dehydrogenase-related 31 kDa protein (202 aa).

11–34 is a binding site for NAD(+); it reads YVADCGGIALETSKVLMTKNIAKL. A substrate-binding site is contributed by Ser139. Catalysis depends on Tyr152, which acts as the Proton acceptor.

Belongs to the short-chain dehydrogenases/reductases (SDR) family.

The protein is Alcohol dehydrogenase-related 31 kDa protein (Adhr) of Drosophila erecta (Fruit fly).